The primary structure comprises 112 residues: U-scoloptoxin(16)-Er5a (112 aa).

A signal peptide spans 1–26 (MNTVSVVQFLAVGCAVFVLYGRGVFA).

This sequence belongs to the scoloptoxin-16 family. Contains 2 disulfide bonds. In terms of tissue distribution, expressed by the venom gland.

The protein localises to the secreted. This chain is U-scoloptoxin(16)-Er5a, found in Ethmostigmus rubripes (Giant centipede).